The sequence spans 327 residues: Transcription factor bHLH71 (327 aa).

Disordered regions lie at residues 46–88 and 151–176; these read ISEI…NQRM and AKLN…HQPS. Over residues 65–76 the composition is skewed to basic residues; that stretch reads RGKKRRRRKPRV. Residues 77–88 are compositionally biased toward basic and acidic residues; it reads CKNEEEAENQRM. The 52-residue stretch at 85–136 folds into the bHLH domain; that stretch reads NQRMTHIAVERNRRRQMNQHLSVLRSLMPQPFAHKGDQASIVGGAIDFIKEL. Residues 152–169 show a composition bias toward polar residues; sequence KLNQSVTSSTSQDSNGEQ.

In terms of assembly, homodimer. Interacts with FAMA. Expressed in leaves, stems, and flowers.

It is found in the nucleus. Functionally, transcription factor. May be involved in the differentiation of stomatal guard cells. In Arabidopsis thaliana (Mouse-ear cress), this protein is Transcription factor bHLH71 (BHLH71).